The sequence spans 409 residues: Putative lipoate-protein ligase A (409 aa).

The region spanning 146-330 is the BPL/LPL catalytic domain; sequence GPDNCRLVFY…RFQKTFKVDG (185 aa). Residues Arg188, 193–196, and Lys249 each bind ATP; that span reads GTVL. Lys249 provides a ligand contact to (R)-lipoate.

The protein belongs to the LplA family. Monomer.

The catalysed reaction is L-lysyl-[lipoyl-carrier protein] + (R)-lipoate + ATP = N(6)-[(R)-lipoyl]-L-lysyl-[lipoyl-carrier protein] + AMP + diphosphate + H(+). It participates in protein modification; protein lipoylation via exogenous pathway; protein N(6)-(lipoyl)lysine from lipoate: step 1/2. The protein operates within protein modification; protein lipoylation via exogenous pathway; protein N(6)-(lipoyl)lysine from lipoate: step 2/2. Catalyzes both the ATP-dependent activation of exogenously supplied lipoate to lipoyl-AMP and the transfer of the activated lipoyl onto the lipoyl domains of lipoate-dependent enzymes. This is Putative lipoate-protein ligase A (AIM22) from Saccharomyces cerevisiae (strain YJM789) (Baker's yeast).